Reading from the N-terminus, the 242-residue chain is Small ribosomal subunit protein uS3 (242 aa).

A KH type-2 domain is found at 39–110 (IRRFIHKKYG…QVRINVVEVE (72 aa)). The tract at residues 216-242 (QSMPVGASPRRRGNRRPQQFEDRSNEG) is disordered. The span at 233-242 (QQFEDRSNEG) shows a compositional bias: basic and acidic residues.

The protein belongs to the universal ribosomal protein uS3 family. As to quaternary structure, part of the 30S ribosomal subunit. Forms a tight complex with proteins S10 and S14.

Binds the lower part of the 30S subunit head. Binds mRNA in the 70S ribosome, positioning it for translation. The polypeptide is Small ribosomal subunit protein uS3 (Prochlorococcus marinus (strain MIT 9303)).